A 97-amino-acid polypeptide reads, in one-letter code: HssA/B-like protein 47 (97 aa).

The disordered stretch occupies residues Met1 to Asn33.

Belongs to the hssA/B family.

In Dictyostelium discoideum (Social amoeba), this protein is HssA/B-like protein 47 (hssl47).